The following is a 333-amino-acid chain: Biotin synthase (333 aa).

Residues 51-278 (RAIQLSTLMS…KSYVRLSAGR (228 aa)) form the Radical SAM core domain. Cysteine 66, cysteine 70, and cysteine 73 together coordinate [4Fe-4S] cluster. The [2Fe-2S] cluster site is built by cysteine 110, cysteine 141, cysteine 201, and arginine 273.

It belongs to the radical SAM superfamily. Biotin synthase family. In terms of assembly, homodimer. Requires [4Fe-4S] cluster as cofactor. The cofactor is [2Fe-2S] cluster.

The enzyme catalyses (4R,5S)-dethiobiotin + (sulfur carrier)-SH + 2 reduced [2Fe-2S]-[ferredoxin] + 2 S-adenosyl-L-methionine = (sulfur carrier)-H + biotin + 2 5'-deoxyadenosine + 2 L-methionine + 2 oxidized [2Fe-2S]-[ferredoxin]. It participates in cofactor biosynthesis; biotin biosynthesis; biotin from 7,8-diaminononanoate: step 2/2. Catalyzes the conversion of dethiobiotin (DTB) to biotin by the insertion of a sulfur atom into dethiobiotin via a radical-based mechanism. This is Biotin synthase from Haemophilus influenzae (strain 86-028NP).